Reading from the N-terminus, the 219-residue chain is ATP phosphoribosyltransferase (219 aa).

Belongs to the ATP phosphoribosyltransferase family. Short subfamily. Heteromultimer composed of HisG and HisZ subunits.

The protein localises to the cytoplasm. The enzyme catalyses 1-(5-phospho-beta-D-ribosyl)-ATP + diphosphate = 5-phospho-alpha-D-ribose 1-diphosphate + ATP. It participates in amino-acid biosynthesis; L-histidine biosynthesis; L-histidine from 5-phospho-alpha-D-ribose 1-diphosphate: step 1/9. Functionally, catalyzes the condensation of ATP and 5-phosphoribose 1-diphosphate to form N'-(5'-phosphoribosyl)-ATP (PR-ATP). Has a crucial role in the pathway because the rate of histidine biosynthesis seems to be controlled primarily by regulation of HisG enzymatic activity. This is ATP phosphoribosyltransferase from Syntrophotalea carbinolica (strain DSM 2380 / NBRC 103641 / GraBd1) (Pelobacter carbinolicus).